The sequence spans 280 residues: MGLKVSSSLLCLTILLAVSSIVSAVNITRVLEKYPEFSTMTELLAKTELTPIINKRQTITVLALNNDAIGSISGRPEEEVKNILMNHVVLDYFDELKLKALKEKSTLLTTLYQSTGLGQQQNGFLNCTKSNGKIYFGSGVKGAPQTAEYITTVFRNPYNLSVVQISMPIVAPGLGSPVKVPPPPPMSSPPAPSPKKGAATPAPAPADEGDYADAPPGLAPETAPASAPSESDSPAPAPDKSGKKKMAAADEAEPPSSASNTGLSFGAVLVLGFVASFVGF.

Residues Met1–Ala24 form the signal peptide. An FAS1 domain is found at Val25 to Ile169. N-linked (GlcNAc...) asparagine glycosylation is found at Asn26, Asn126, and Asn159. The span at Val180 to Ser193 shows a compositional bias: pro residues. A disordered region spans residues Val180–Gly262. Positions Ala219–Pro234 are enriched in low complexity. Ser256 carries GPI-anchor amidated serine lipidation. Positions Ser257 to Phe280 are cleaved as a propeptide — removed in mature form.

Belongs to the fasciclin-like AGP family.

It is found in the cell membrane. In terms of biological role, may be a cell surface adhesion protein. In Arabidopsis thaliana (Mouse-ear cress), this protein is Fasciclin-like arabinogalactan protein 3 (FLA3).